Consider the following 143-residue polypeptide: Transcriptional regulator MraZ (143 aa).

SpoVT-AbrB domains follow at residues Thr5 to Glu47 and Thr76 to Arg119.

It belongs to the MraZ family. In terms of assembly, forms oligomers.

It localises to the cytoplasm. The protein localises to the nucleoid. The sequence is that of Transcriptional regulator MraZ from Saccharopolyspora erythraea (strain ATCC 11635 / DSM 40517 / JCM 4748 / NBRC 13426 / NCIMB 8594 / NRRL 2338).